Here is a 581-residue protein sequence, read N- to C-terminus: DNA primase (581 aa).

The segment at 40–64 (CPFHNEKTPSFTVNGEKQFYHCFGC) adopts a CHC2-type zinc-finger fold. Residues 259–341 (QRLLVVEGYM…GRQVRFMFLP (83 aa)) form the Toprim domain. Mg(2+) contacts are provided by Glu-265, Asp-309, and Asp-311.

Belongs to the DnaG primase family. Monomer. Interacts with DnaB. Requires Zn(2+) as cofactor. Mg(2+) serves as cofactor.

It carries out the reaction ssDNA + n NTP = ssDNA/pppN(pN)n-1 hybrid + (n-1) diphosphate.. Functionally, RNA polymerase that catalyzes the synthesis of short RNA molecules used as primers for DNA polymerase during DNA replication. The sequence is that of DNA primase from Salmonella typhimurium (strain LT2 / SGSC1412 / ATCC 700720).